Here is a 1160-residue protein sequence, read N- to C-terminus: MSPNNQNEYEIIDALSPTSVSDNSIRYPLANDQTNTLQNMNYKDYLKMTESTNAELSRNPGTFISAQDAVGTGIDIVSTIISGLGIPVLGEVFSILGSLIGLLWPSNNENVWQIFMNRVEELIDQKILDSVRSRAIADLANSRIAVEYYQNALEDWRKNPHSTRSAALVKERFGNAEAILRTNMGSFSQTNYETPLLPTYAQAASLHLLVMRDVQIYGKEWGYPQNDIDLFYKEQVSYTARYSDHCVQWYNAGLNKLRGTGAKQWVDYNRFRREMNVMVLDLVALFPNYDARIYPLETNAELTREIFTDPVGSYVTGQSSTLISWYDMIPAALPSFSTLENLLRKPDFFTLLQEIRMYTSFRQNGTIEYYNYWGGQRLTLSYIYGSSFNKYSGVLAGAEDIIPVGQNDIYRVVWTYIGRYTNSLLGVNPVTFYFSNNTQKTYSKPKQFAGGIKTIDSGEELTYENYQSYSHRVSYITSFEIKSTGGTVLGVVPIFGWTHSSASRNNFIYATKISQIPINKASRTSGGAVWNFQEGLYNGGPVMKLSGSGSQVINLRVATDAKGASQRYRIRIRYASDRAGKFTISSRSPENPATYSASIAYTNTMSTNASLTYSTFAYAESGPINLGISGSSRTFDISITKEAGAANLYIDRIEFIPVNTLFEAEEDLDVAKKAVNGLFTNEKDALQTSVTDYQVNQAANLIECLSDELYPNEKRMLWDAVKEAKRLVQARNLLQDTGFNRINGENGWTGSTGIEVVEGDVLFKDRSLRLTSAREIDTETYPTYLYQQIDESLLKPYTRYKLKGFIGSSQDLEIKLIRHRANQIVKNVPDNLLPDVRPVNSCGGVDRCSEQQYVDANLALENNGENGNMSSDSHAFSFHIDTGEIDLNENTGIWIVFKIPTTNGNATLGNLEFVEEGPLSGETLEWAQQQEQQWQDKMARKRAASEKTYYAAKQAIDRLFADYQDQKLNSGVEMSDLLAAQNLVQSIPYVYNDALPEIPGMNYTSFTELTNRLQQAWNLYDLQNAIPNGDFRNGLSNWNATSDVNVQQLSDTSVLVIPNWNSQVSQQFTVQPNYRYVLRVTARKEGVGDGYVIIRDGANQTETLTFNICDDDTGVLSTDQTSYITKTVEFTPSTEQVWIDMSETEGVFNIESVELVLEEE.

It belongs to the delta endotoxin family.

Functionally, promotes colloidosmotic lysis by binding to the midgut epithelial cells of insects. Active on various scarabaeid beetles such as Anomala cuprea, A.rufocuprea and Popillia japonica. The chain is Pesticidal crystal protein Cry8Ca (cry8Ca) from Bacillus thuringiensis subsp. japonensis.